The chain runs to 195 residues: dCTP deaminase (195 aa).

DCTP contacts are provided by residues R105–R110, D123, T131–E133, Q152, Y166, K173, and Q177. The active-site Proton donor/acceptor is the E133. The interval K159–Q195 is disordered. The span at T160–S172 shows a compositional bias: basic and acidic residues. The span at Y174–K184 shows a compositional bias: polar residues. Residues Q186–Q195 are compositionally biased toward basic and acidic residues.

This sequence belongs to the dCTP deaminase family. Homotrimer.

The catalysed reaction is dCTP + H2O + H(+) = dUTP + NH4(+). It functions in the pathway pyrimidine metabolism; dUMP biosynthesis; dUMP from dCTP (dUTP route): step 1/2. Its function is as follows. Catalyzes the deamination of dCTP to dUTP. The polypeptide is dCTP deaminase (Haloarcula marismortui (strain ATCC 43049 / DSM 3752 / JCM 8966 / VKM B-1809) (Halobacterium marismortui)).